A 212-amino-acid polypeptide reads, in one-letter code: ATP-dependent Clp protease proteolytic subunit 2 (212 aa).

A disordered region spans residues 1–20 (MSHNTSIASQGMPAMAGPET). Ser-107 functions as the Nucleophile in the catalytic mechanism. His-132 is an active-site residue.

Belongs to the peptidase S14 family. In terms of assembly, fourteen ClpP subunits assemble into 2 heptameric rings which stack back to back to give a disk-like structure with a central cavity, resembling the structure of eukaryotic proteasomes.

Its subcellular location is the cytoplasm. The enzyme catalyses Hydrolysis of proteins to small peptides in the presence of ATP and magnesium. alpha-casein is the usual test substrate. In the absence of ATP, only oligopeptides shorter than five residues are hydrolyzed (such as succinyl-Leu-Tyr-|-NHMec, and Leu-Tyr-Leu-|-Tyr-Trp, in which cleavage of the -Tyr-|-Leu- and -Tyr-|-Trp bonds also occurs).. In terms of biological role, cleaves peptides in various proteins in a process that requires ATP hydrolysis. Has a chymotrypsin-like activity. Plays a major role in the degradation of misfolded proteins. This is ATP-dependent Clp protease proteolytic subunit 2 from Cutibacterium acnes (strain DSM 16379 / KPA171202) (Propionibacterium acnes).